Here is a 1065-residue protein sequence, read N- to C-terminus: Carbamoyl phosphate synthase large chain (1065 aa).

Residues 1-401 (MPLDKTIKKV…ALLKAVTSLE (401 aa)) form a carboxyphosphate synthetic domain region. Residues arginine 129, arginine 169, glycine 175, glycine 176, glutamine 208, valine 210, glutamate 215, glycine 241, valine 242, histidine 243, glutamine 284, and glutamate 298 each coordinate ATP. The ATP-grasp 1 domain occupies 133–327 (KNLMEEIDEP…IAKIAAKIAV (195 aa)). Mg(2+) is bound by residues glutamine 284, glutamate 298, and asparagine 300. Glutamine 284, glutamate 298, and asparagine 300 together coordinate Mn(2+). The tract at residues 402–548 (GKISGLRLEK…YSSYENEDEN (147 aa)) is oligomerization domain. The segment at 549–931 (EVTDDKKIVV…AIYKGFRAAG (383 aa)) is carbamoyl phosphate synthetic domain. In terms of domain architecture, ATP-grasp 2 spans 673–863 (SELLKELNIP…MVKLAVEILT (191 aa)). 10 residues coordinate ATP: arginine 709, lysine 748, isoleucine 750, glutamate 754, glycine 779, valine 780, histidine 781, serine 782, glutamine 822, and glutamate 834. The Mg(2+) site is built by glutamine 822, glutamate 834, and asparagine 836. Mn(2+) contacts are provided by glutamine 822, glutamate 834, and asparagine 836. Positions 932 to 1065 (IEVPKDGGNL…EYRAMKEYFK (134 aa)) constitute an MGS-like domain. An allosteric domain region spans residues 932 to 1065 (IEVPKDGGNL…EYRAMKEYFK (134 aa)).

The protein belongs to the CarB family. In terms of assembly, composed of two chains; the small (or glutamine) chain promotes the hydrolysis of glutamine to ammonia, which is used by the large (or ammonia) chain to synthesize carbamoyl phosphate. Tetramer of heterodimers (alpha,beta)4. Mg(2+) is required as a cofactor. The cofactor is Mn(2+).

It catalyses the reaction hydrogencarbonate + L-glutamine + 2 ATP + H2O = carbamoyl phosphate + L-glutamate + 2 ADP + phosphate + 2 H(+). It carries out the reaction hydrogencarbonate + NH4(+) + 2 ATP = carbamoyl phosphate + 2 ADP + phosphate + 2 H(+). It functions in the pathway amino-acid biosynthesis; L-arginine biosynthesis; carbamoyl phosphate from bicarbonate: step 1/1. Its pathway is pyrimidine metabolism; UMP biosynthesis via de novo pathway; (S)-dihydroorotate from bicarbonate: step 1/3. Functionally, large subunit of the glutamine-dependent carbamoyl phosphate synthetase (CPSase). CPSase catalyzes the formation of carbamoyl phosphate from the ammonia moiety of glutamine, carbonate, and phosphate donated by ATP, constituting the first step of 2 biosynthetic pathways, one leading to arginine and/or urea and the other to pyrimidine nucleotides. The large subunit (synthetase) binds the substrates ammonia (free or transferred from glutamine from the small subunit), hydrogencarbonate and ATP and carries out an ATP-coupled ligase reaction, activating hydrogencarbonate by forming carboxy phosphate which reacts with ammonia to form carbamoyl phosphate. This is Carbamoyl phosphate synthase large chain from Clostridium acetobutylicum (strain ATCC 824 / DSM 792 / JCM 1419 / IAM 19013 / LMG 5710 / NBRC 13948 / NRRL B-527 / VKM B-1787 / 2291 / W).